The following is an 81-amino-acid chain: Protein Vpu (81 aa).

Topologically, residues 1 to 7 (MQSLEIL) are extracellular. Residues 8–28 (AIVALVVAAILAIVVWTIVGI) form a helical membrane-spanning segment. The Cytoplasmic portion of the chain corresponds to 29 to 81 (EIRKTLRQKKIDRLIDRIRERAEDSGNESDGDEEELSALVEMGHHAPWDVDDL). The segment at 50–81 (AEDSGNESDGDEEELSALVEMGHHAPWDVDDL) is disordered. 2 positions are modified to phosphoserine; by host CK2: Ser-53 and Ser-57. Acidic residues predominate over residues 53–64 (SGNESDGDEEEL). A compositionally biased stretch (basic and acidic residues) spans 70-81 (MGHHAPWDVDDL).

It belongs to the HIV-1 VPU protein family. In terms of assembly, homopentamer. Interacts with host CD4 and BRTC; these interactions induce proteasomal degradation of CD4. Interacts with host BST2; this interaction leads to the degradation of host BST2. Interacts with host FBXW11. Interacts with host AP1M1; this interaction plays a role in the mistrafficking and subsequent degradation of host BST2. Interacts with host RANBP2; this interaction allows Vpu to down-regulate host BLM sumoylation. Post-translationally, phosphorylated by host CK2. This phosphorylation is necessary for interaction with human BTRC and degradation of CD4.

The protein localises to the host membrane. Ion channel activity is inhibited by hexamethylene amiloride in vitro. Functionally, enhances virion budding by targeting host CD4 and Tetherin/BST2 to proteasome degradation. Degradation of CD4 prevents any unwanted premature interactions between viral Env and its host receptor CD4 in the endoplasmic reticulum. Degradation of antiretroviral protein Tetherin/BST2 is important for virion budding, as BST2 tethers new viral particles to the host cell membrane. Mechanistically, Vpu bridges either CD4 or BST2 to BTRC, a substrate recognition subunit of the Skp1/Cullin/F-box protein E3 ubiquitin ligase, induces their ubiquitination and subsequent proteasomal degradation. The alteration of the E3 ligase specificity by Vpu seems to promote the degradation of host IKBKB, leading to NF-kappa-B down-regulation and subsequent apoptosis. Acts as a viroporin that forms an oligomeric ion channel in membranes. Modulates the host DNA repair mechanisms to promote degradation of nuclear viral cDNA in cells that are already productively infected in order to suppress immune sensing and proviral hyper-integration (superinfection). Manipulates PML-NBs and modulates SUMOylation of host BLM protein thereby enhancing its DNA-end processing activity toward viral unintegrated linear DNA. Also inhibits RAD52-mediated homologous repair of viral cDNA, preventing the generation of dead-end circular forms of single copies of the long terminal repeat and permitting sustained nucleolytic attack. In Homo sapiens (Human), this protein is Protein Vpu.